Here is a 395-residue protein sequence, read N- to C-terminus: Succinyl-diaminopimelate desuccinylase (395 aa).

A Zn(2+)-binding site is contributed by histidine 74. Aspartate 76 is a catalytic residue. Aspartate 107 is a binding site for Zn(2+). The Proton acceptor role is filled by glutamate 141. Zn(2+) contacts are provided by glutamate 142, glutamate 170, and histidine 368.

This sequence belongs to the peptidase M20A family. DapE subfamily. Homodimer. Zn(2+) is required as a cofactor. It depends on Co(2+) as a cofactor.

The enzyme catalyses N-succinyl-(2S,6S)-2,6-diaminopimelate + H2O = (2S,6S)-2,6-diaminopimelate + succinate. It functions in the pathway amino-acid biosynthesis; L-lysine biosynthesis via DAP pathway; LL-2,6-diaminopimelate from (S)-tetrahydrodipicolinate (succinylase route): step 3/3. In terms of biological role, catalyzes the hydrolysis of N-succinyl-L,L-diaminopimelic acid (SDAP), forming succinate and LL-2,6-diaminopimelate (DAP), an intermediate involved in the bacterial biosynthesis of lysine and meso-diaminopimelic acid, an essential component of bacterial cell walls. This Chelativorans sp. (strain BNC1) protein is Succinyl-diaminopimelate desuccinylase.